The following is a 269-amino-acid chain: Phosphate import ATP-binding protein PstB 1 (269 aa).

The region spanning phenylalanine 16–proline 255 is the ABC transporter domain. An ATP-binding site is contributed by glycine 48 to serine 55.

Belongs to the ABC transporter superfamily. Phosphate importer (TC 3.A.1.7) family. As to quaternary structure, the complex is composed of two ATP-binding proteins (PstB), two transmembrane proteins (PstC and PstA) and a solute-binding protein (PstS).

It is found in the cell inner membrane. It carries out the reaction phosphate(out) + ATP + H2O = ADP + 2 phosphate(in) + H(+). Its function is as follows. Part of the ABC transporter complex PstSACB involved in phosphate import. Responsible for energy coupling to the transport system. This is Phosphate import ATP-binding protein PstB 1 from Synechocystis sp. (strain ATCC 27184 / PCC 6803 / Kazusa).